The following is a 366-amino-acid chain: Inactive protein RESTRICTED TEV MOVEMENT 2 (366 aa).

The sHSP domain occupies 14-121 (VQYEDFVPKS…LPETSRTEAA (108 aa)). Residues 129-133 (LEEKR) form an A-1 repeat. The tract at residues 129–220 (LEEKRLLEES…LEERRLEERK (92 aa)) is 6 X 5 AA repeats A of L-E-E-[SKR]-[ERK]. An A-2 repeat occupies 135–139 (LEESR). An A-3 repeat occupies 156–160 (LEEKE). One copy of the B-1 repeat lies at 163-176 (IRKLQEEAKAKEEA). The 3 X 14 AA repeats B of [IMA]-[RK]-K-L-Q-E-E-A-K-A-K-E-[EK]-[LA] stretch occupies residues 163–206 (IRKLQEEAKAKEEAEMRKLQEEAKANEEAAAKKLQEEIEAKEKL). Residues 178 to 191 (MRKLQEEAKANEEA) form a B-2 repeat. The stretch at 193-205 (AKKLQEEIEAKEK) is one B-3 repeat. The stretch at 206-210 (LEERK) is one A-4 repeat. Residues 211–215 (LEERR) form an A-5 repeat. The A-6 repeat unit spans residues 216-220 (LEERK). A helical membrane pass occupies residues 322 to 342 (LMMNVGVAALVIFALGAYVSY). The segment at 345–366 (CSSSSSSSSSSPSSSSSSTKPE) is disordered. Low complexity predominate over residues 346–366 (SSSSSSSSSSPSSSSSSTKPE).

Belongs to the small heat shock protein (HSP20) family.

It localises to the cell membrane. Functionally, seems to not be involved in heat resistance. Unable to mediate restriction of long-distance movement of the pathogenic tobacco etch virus (TEV) without causing a hypersensitive response or inducing systemic acquired resistance. This Arabidopsis thaliana (Mouse-ear cress) protein is Inactive protein RESTRICTED TEV MOVEMENT 2 (RTM2).